Consider the following 319-residue polypeptide: MAKIKNVAIQMDHVSGINIAGDSTFAISLEAQARGYRLFHYTPERLSMRDGKIYATVEQMELRDIKGDHFSLSEPERVDLSTMDVIHLRQDPPFDMAYITSTHLLERIHPKTLVVNDPAWVRNSPEKIFVTEFADLMPKTLITKDVSEIARFRNEMGDIILKPLYGNGGAGVFHSARDDRNFSSLLEMFGQMFREPYIAQEYLPDVRKGDKRILLVDGEPVGAINRVPAENDARSNMHAGGRPEPTELTAREQEICRRIGPALRERGFLFVGIDVIGDYMTEINVTSPTGIREVRKFGGADVASLLWDAIEKKRDAQDF.

Residues 127-311 (KIFVTEFADL…VASLLWDAIE (185 aa)) enclose the ATP-grasp domain. 153-209 (RNEMGDIILKPLYGNGGAGVFHSARDDRNFSSLLEMFGQMFREPYIAQEYLPDVRKG) provides a ligand contact to ATP. Mg(2+) is bound by residues E282 and N284.

This sequence belongs to the prokaryotic GSH synthase family. It depends on Mg(2+) as a cofactor. Mn(2+) is required as a cofactor.

The enzyme catalyses gamma-L-glutamyl-L-cysteine + glycine + ATP = glutathione + ADP + phosphate + H(+). It functions in the pathway sulfur metabolism; glutathione biosynthesis; glutathione from L-cysteine and L-glutamate: step 2/2. This Agrobacterium fabrum (strain C58 / ATCC 33970) (Agrobacterium tumefaciens (strain C58)) protein is Glutathione synthetase.